The following is a 586-amino-acid chain: Alanine racemase ungC (586 aa).

The segment at 187–206 (RVGALPAAASTASPMGSSLP) is disordered. Residues 196–206 (STASPMGSSLP) are compositionally biased toward polar residues.

It belongs to the trans-sulfuration enzymes family. Requires pyridoxal 5'-phosphate as cofactor.

The enzyme catalyses L-alanine = D-alanine. Its pathway is secondary metabolite biosynthesis. In terms of biological role, alanine racemase; part of the gene cluster that mediates the biosynthesis of the unguisins, gamma-aminobutyric acid (GABA)-containing fungal cyclic heptapeptides with the amino acid sequence cyclo-(D-Ala1-D-Val2-L-Phe3-D-Val4-D-Ala5-D-Trp6-GABA7) for unguisin A and cyclo-(D-Ala1-D-Val2-L-Leu3-D-Val4-D-Ala5-D-Trp6-GABA7) for unguisin B. Within the pathway, the alanine racemase ungC catalyzes the interconversion of L-alanine and D-alanine, providing the D-alanine which is accepted by the first adenylation domain of the nonribosomal peptide synthetase (NRPS) ungA. UngA is the main enzyme within the cluster which condenses the 7 residues using its respective 7 modules. The terminal condensation domain (Ct) is involved in cyclization with D-alanine and thereby releasing of unguisins A and B. Finally, the hydrolase ungD catalyzes the hydrolysis between the D-tryptophan and GABA residues of unguisins A and B to produce the corresponding linear peptides. The protein is Alanine racemase ungC of Aspergillus violaceofuscus (strain CBS 115571).